The sequence spans 1080 residues: Origin recognition complex subunit 3 (1080 aa).

Disordered regions lie at residues 92–112, 566–701, and 869–902; these read YGIS…DDSS, TIKL…PKRI, and IKNE…ENEQ. Residues 651–661 are compositionally biased toward basic and acidic residues; the sequence is IKSDLECNDND. Over residues 662-671 the composition is skewed to acidic residues; it reads KDNDDNDNDI. Low complexity-rich tracts occupy residues 672–688 and 875–896; these read NENN…NSNN and QQQQ…QQQQ.

It belongs to the ORC3 family. As to quaternary structure, ORC is composed of six subunits.

The protein localises to the nucleus. In terms of biological role, component of the origin recognition complex (ORC) that binds origins of replication. DNA-binding is ATP-dependent, however specific DNA sequences that define origins of replication have not been identified so far. ORC is required to assemble the pre-replication complex necessary to initiate DNA replication. The sequence is that of Origin recognition complex subunit 3 (orcC) from Dictyostelium discoideum (Social amoeba).